The chain runs to 1186 residues: Myelin transcription factor 1-like protein (1186 aa).

The tract at residues 1-21 is disordered; the sequence is MEVDTEEKRHRTRSKGVRVPV. The segment at 22–65 adopts a CCHHC-type 1 zinc-finger fold; the sequence is EPAIQELFSCPTPGCDGSGHVSGKYARHRSVYGCPLAKKRKTQD. C31, C36, H49, and C55 together coordinate Zn(2+). Disordered regions lie at residues 56-175 and 220-247; these read PLAK…QMNC and RTES…GRKS. A compositionally biased stretch (acidic residues) spans 86–169; sequence SVDECDDSDG…EEEEEEEENE (84 aa). At S250 the chain carries Phosphoserine. Disordered regions lie at residues 342–372 and 449–513; these read SETN…GRTP and REKM…GCDG. Positions 343–357 are enriched in polar residues; it reads ETNPQERNPQQNMNI. Composition is skewed to basic and acidic residues over residues 361-372, 449-487, and 495-505; these read VRPEEDFPGRTP, REKM…DSHV, and DPSRTEKKESK. CCHHC-type zinc fingers lie at residues 497–540 and 541–584; these read SRTE…PPEI and LAMH…KLAK. Positions 506, 511, 524, 530, 550, 555, 568, and 574 each coordinate Zn(2+). Disordered regions lie at residues 659-709 and 753-780; these read RAIA…GGGS and KPQD…MNKQ. The segment covering 666 to 683 has biased composition (basic and acidic residues); that stretch reads QTRDISPKGYDDAKRYCK. The segment covering 685-709 has biased composition (low complexity); it reads PSPSSSSTSSYAPSSSSNLSCGGGS. CCHHC-type zinc fingers lie at residues 896–939, 945–988, and 998–1041; these read LATS…GIRI, DKED…QKDG, and KSVK…MKKA. 12 residues coordinate Zn(2+): C905, C910, H923, C929, C954, C959, H972, C978, C1007, C1012, H1025, and C1031. Residues 1056–1130 are a coiled coil; the sequence is SNGIENDEEI…LANLSQSLIH (75 aa).

It belongs to the MYT1 family. Interacts with SIN3B.

It localises to the nucleus. The protein resides in the chromosome. Functionally, transcription factor that plays a key role in neuronal differentiation by specifically repressing expression of non-neuronal genes during neuron differentiation. In contrast to other transcription repressors that inhibit specific lineages, mediates repression of multiple differentiation programs. Also represses expression of negative regulators of neurogenesis, such as members of the Notch signaling pathway, including HES1. The combination of three transcription factors, ASCL1, POU3F2/BRN2 and MYT1L, is sufficient to reprogram fibroblasts and other somatic cells into induced neuronal (iN) cells in vitro. Directly binds the 5'-AAGTT-3' core motif present on the promoter of target genes and represses transcription by recruiting a multiprotein complex containing SIN3B. The 5'-AAGTT-3' core motif is absent from the promoter of neural genes. The protein is Myelin transcription factor 1-like protein of Homo sapiens (Human).